The sequence spans 536 residues: Feruloyl esterase B (536 aa).

The signal sequence occupies residues 1–20 (MKTSIVLSIVALFLTSKASA). In terms of domain architecture, CBM10 spans 21–59 (DCWSERLGWPCCSDSNAEVIYVDDDGDWGVENNDWCGIQ). The segment at 22–59 (CWSERLGWPCCSDSNAEVIYVDDDGDWGVENNDWCGIQ) is cellulose-binding. Residue asparagine 65 is glycosylated (N-linked (GlcNAc...) asparagine). Repeat copies occupy residues 78–90 (NQGG…DFGG), 91–103 (NQGG…DFGG), 104–116 (NQGG…DFGG), 117–129 (NQGG…DFGG), 134–146 (NQGG…DFGG), 151–163 (NQGG…DFGG), 164–176 (NQGG…DFGG), 181–193 (NQGG…DFGG), 194–206 (NQGG…DFGG), 211–223 (NQGG…DFGG), 224–236 (NQGG…DFGG), and 237–249 (NQGG…DFGG). Positions 78 to 249 (NQGGGMPWGD…GGMQWGDFGG (172 aa)) are 12 X 13 AA repeats of N-Q-G-G-G-M-[PQ]-W-G-D-F-G-G. Gly residues predominate over residues 203–252 (DFGGNQGGNQGGGMPWGDFGGNQGGGMQWGDFGGNQGGGMQWGDFGGNQG). The interval 203–273 (DFGGNQGGNQ…SGPTVEYSTD (71 aa)) is disordered. The catalytic stretch occupies residues 257–536 (WGNQGGNSGP…WDFVKQFSLP (280 aa)).

As to quaternary structure, component of the multienzyme cellulase-hemicellulase complex.

Its subcellular location is the secreted. The enzyme catalyses feruloyl-polysaccharide + H2O = ferulate + polysaccharide.. With respect to regulation, inhibited by the specific serine esterase inhibitor AEBSF. Functionally, involved in degradation of plant cell walls. Hydrolyzes of the feruloyl-arabinose ester bond in arabinoxylans as well as the feruloyl-galactose and feruloyl-arabinose ester bonds in pectin. This is Feruloyl esterase B (ESTA) from Piromyces equi.